The chain runs to 330 residues: Phenylalanine--tRNA ligase alpha subunit (330 aa).

Residue glutamate 257 participates in Mg(2+) binding.

Belongs to the class-II aminoacyl-tRNA synthetase family. Phe-tRNA synthetase alpha subunit type 1 subfamily. As to quaternary structure, tetramer of two alpha and two beta subunits. Mg(2+) serves as cofactor.

It is found in the cytoplasm. It carries out the reaction tRNA(Phe) + L-phenylalanine + ATP = L-phenylalanyl-tRNA(Phe) + AMP + diphosphate + H(+). The sequence is that of Phenylalanine--tRNA ligase alpha subunit from Nostoc sp. (strain PCC 7120 / SAG 25.82 / UTEX 2576).